Reading from the N-terminus, the 919-residue chain is Probable dipeptidyl-aminopeptidase B (919 aa).

Basic and acidic residues predominate over residues 1 to 10 (MRRSDGHEET). The disordered stretch occupies residues 1 to 53 (MRRSDGHEETSEFLPMTHSRSVSAASQTSTDSSLSTESLFPREQKPFPNAMGG). The Cytoplasmic segment spans residues 1-92 (MRRSDGHEET…AATGGGRARR (92 aa)). Residues 21–38 (SVSAASQTSTDSSLSTES) are compositionally biased toward low complexity. Residues 93-113 (IFWILVLLCLGGWLLAFVLFL) traverse the membrane as a helical; Signal-anchor for type II membrane protein segment. Topologically, residues 114 to 919 (TGGRANYQTA…MKRSLRLLSP (806 aa)) are vacuolar. N-linked (GlcNAc...) asparagine glycans are attached at residues N200, N352, and N643. S757 serves as the catalytic Charge relay system. The N-linked (GlcNAc...) asparagine glycan is linked to N811. Catalysis depends on charge relay system residues D834 and H867.

It belongs to the peptidase S9B family.

The protein resides in the vacuole membrane. It catalyses the reaction Release of an N-terminal dipeptide, Xaa-Yaa-|-Zaa-, from a polypeptide, preferentially when Yaa is Pro, provided Zaa is neither Pro nor hydroxyproline.. In terms of biological role, type IV dipeptidyl-peptidase which removes N-terminal dipeptides sequentially from polypeptides having unsubstituted N-termini provided that the penultimate residue is proline. This chain is Probable dipeptidyl-aminopeptidase B (dapB), found in Aspergillus fumigatus (strain CBS 144.89 / FGSC A1163 / CEA10) (Neosartorya fumigata).